The following is a 229-amino-acid chain: Dephospho-CoA kinase (229 aa).

Residues 3-203 form the DPCK domain; sequence TVGLTGGIGS…ARRDAKATAK (201 aa). 11–16 contacts ATP; the sequence is GSGKSA. Residues 203–229 form a disordered region; that stretch reads KATAKAETVASGTDTAASGTDTAAPAG.

This sequence belongs to the CoaE family.

It is found in the cytoplasm. The catalysed reaction is 3'-dephospho-CoA + ATP = ADP + CoA + H(+). It participates in cofactor biosynthesis; coenzyme A biosynthesis; CoA from (R)-pantothenate: step 5/5. Catalyzes the phosphorylation of the 3'-hydroxyl group of dephosphocoenzyme A to form coenzyme A. This Frankia casuarinae (strain DSM 45818 / CECT 9043 / HFP020203 / CcI3) protein is Dephospho-CoA kinase.